A 413-amino-acid polypeptide reads, in one-letter code: Type II methyltransferase M.NaeI (413 aa).

The SAM-dependent MTase C5-type domain maps to 4 to 317; the sequence is LEVVEICAGA…KRIRAALNME (314 aa). Residue cysteine 78 is part of the active site.

This sequence belongs to the class I-like SAM-binding methyltransferase superfamily. C5-methyltransferase family.

The catalysed reaction is a 2'-deoxycytidine in DNA + S-adenosyl-L-methionine = a 5-methyl-2'-deoxycytidine in DNA + S-adenosyl-L-homocysteine + H(+). Its function is as follows. A methylase that recognizes the double-stranded sequence 5'-GCCGGC-3', methylates C-? on both strands, and protects the DNA from cleavage by the NaeI endonuclease. This Lentzea aerocolonigenes (Lechevalieria aerocolonigenes) protein is Type II methyltransferase M.NaeI.